Here is a 418-residue protein sequence, read N- to C-terminus: Serine hydroxymethyltransferase (418 aa).

Residues leucine 121 and 125–127 (GHL) each bind (6S)-5,6,7,8-tetrahydrofolate. At lysine 230 the chain carries N6-(pyridoxal phosphate)lysine. (6S)-5,6,7,8-tetrahydrofolate is bound at residue 355-357 (SPF).

This sequence belongs to the SHMT family. Homodimer. Requires pyridoxal 5'-phosphate as cofactor.

The protein localises to the cytoplasm. It catalyses the reaction (6R)-5,10-methylene-5,6,7,8-tetrahydrofolate + glycine + H2O = (6S)-5,6,7,8-tetrahydrofolate + L-serine. The protein operates within one-carbon metabolism; tetrahydrofolate interconversion. It participates in amino-acid biosynthesis; glycine biosynthesis; glycine from L-serine: step 1/1. Its function is as follows. Catalyzes the reversible interconversion of serine and glycine with tetrahydrofolate (THF) serving as the one-carbon carrier. This reaction serves as the major source of one-carbon groups required for the biosynthesis of purines, thymidylate, methionine, and other important biomolecules. Also exhibits THF-independent aldolase activity toward beta-hydroxyamino acids, producing glycine and aldehydes, via a retro-aldol mechanism. This Alcanivorax borkumensis (strain ATCC 700651 / DSM 11573 / NCIMB 13689 / SK2) protein is Serine hydroxymethyltransferase.